The chain runs to 179 residues: Inner membrane-spanning protein YciB (179 aa).

A run of 5 helical transmembrane segments spans residues 22–42 (IYAA…YSWV), 50–70 (MALI…FFHN), 76–96 (WKVT…QWVM), 121–141 (LAWA…AFWL), and 149–169 (FKVF…GIYI).

The protein belongs to the YciB family.

It localises to the cell inner membrane. In terms of biological role, plays a role in cell envelope biogenesis, maintenance of cell envelope integrity and membrane homeostasis. The chain is Inner membrane-spanning protein YciB from Escherichia coli O127:H6 (strain E2348/69 / EPEC).